The following is a 206-amino-acid chain: Tumor protein D54 (206 aa).

Met-1 is subject to N-acetylmethionine. Over residues 1–14 (MDSAGQDINLNSPN) the composition is skewed to polar residues. The interval 1–24 (MDSAGQDINLNSPNKGLLSDSMTD) is disordered. A phosphoserine mark is found at Ser-3, Ser-12, Ser-19, and Ser-21. The stretch at 38–82 (VEGLTEAEEEELRAELTKVEEEIVTLRQVLAAKERHCGELKRRLG) forms a coiled coil. Residues Ser-96, Ser-149, and Ser-161 each carry the phosphoserine modification. At Thr-163 the chain carries Phosphothreonine. Ser-166 is subject to Phosphoserine. Position 173 is a phosphothreonine (Thr-173). Positions 175–185 (KSKVVGDRENG) are enriched in basic and acidic residues. The tract at residues 175–206 (KSKVVGDRENGSDNLPSSAGSGDKPLSDPAPF) is disordered. A phosphoserine mark is found at Ser-192 and Ser-195.

It belongs to the TPD52 family. In terms of assembly, forms a homodimer or heterodimer with other members of the family. Interacts with MAL2.

The polypeptide is Tumor protein D54 (TPD52L2) (Homo sapiens (Human)).